The following is a 751-amino-acid chain: Cytosolic neutral trehalase (751 aa).

The span at 1-10 (MSQVNTSQGP) shows a compositional bias: polar residues. Residues 1 to 59 (MSQVNTSQGPVAQGRQRRLSSLSEFNDPFSNAEVYYGPPTDPRKQKQAKPAKINRTRTM) are disordered. Ser2 carries the N-acetylserine modification. Ser20 and Ser21 each carry phosphoserine; by PKA. Phosphoserine is present on Ser23. The span at 45–55 (QKQAKPAKINR) shows a compositional bias: basic residues. Thr58 is subject to Phosphothreonine. The residue at position 60 (Ser60) is a Phosphoserine; by PKA. Ser66 bears the Phosphoserine mark. The tract at residues 73–92 (FGKLQQTRRGSEDDTYSSSQ) is disordered. Ser83 bears the Phosphoserine; by PKA mark. Ca(2+) contacts are provided by Asp114, Asp116, Asn118, Gln120, and Asp125. Substrate is bound by residues Arg302, 309-310 (WD), Asn346, 355-357 (RSQ), Glu424, Arg473, and Gly476. Active-site proton donor/acceptor residues include Asp478 and Glu674.

Belongs to the glycosyl hydrolase 37 family. As to quaternary structure, monomer. Interacts with BMH1 dimers; the interaction is direct and activates NTH1. Interacts with BMH2. Ca(2+) serves as cofactor. Phosphorylated by protein kinase A (PKA); phosphorylation at Ser-60 and Ser-83 is required for activation by the 14-3-3 proteins BMH1 and BMH2.

The protein localises to the cytoplasm. The enzyme catalyses alpha,alpha-trehalose + H2O = alpha-D-glucose + beta-D-glucose. Its pathway is carbohydrate degradation. With respect to regulation, activated by calcium. Activated by protein kinase A (PKA)-mediated phosphorylation. Its function is as follows. Hydrolyzes intracellular trehalose to glucose. The disaccharide trehalose serves as a storage carbohydrate that is mobilized during nutrient stress. Regulates the level of trehalose as a protectant for cell integrity during heat stress. This chain is Cytosolic neutral trehalase, found in Saccharomyces cerevisiae (strain ATCC 204508 / S288c) (Baker's yeast).